A 217-amino-acid chain; its full sequence is Probable transaldolase (217 aa).

K83 functions as the Schiff-base intermediate with substrate in the catalytic mechanism.

The protein belongs to the transaldolase family. Type 3B subfamily.

The protein resides in the cytoplasm. The enzyme catalyses D-sedoheptulose 7-phosphate + D-glyceraldehyde 3-phosphate = D-erythrose 4-phosphate + beta-D-fructose 6-phosphate. It participates in carbohydrate degradation; pentose phosphate pathway; D-glyceraldehyde 3-phosphate and beta-D-fructose 6-phosphate from D-ribose 5-phosphate and D-xylulose 5-phosphate (non-oxidative stage): step 2/3. Functionally, transaldolase is important for the balance of metabolites in the pentose-phosphate pathway. The protein is Probable transaldolase of Brucella abortus (strain S19).